The chain runs to 843 residues: Translation initiation factor IF-2 (843 aa).

Disordered stretches follow at residues 50–72 (LKSS…KTTS) and 94–260 (QRSP…TGPV). The span at 96–135 (SPEEIQAEQKREQDERRAAENAARDKVDADVRQRNEEQAR) shows a compositional bias: basic and acidic residues. The span at 139-173 (TATAAAAPAAKAEPAPAAAAPAPAPVVADAPASED) shows a compositional bias: low complexity. Basic and acidic residues-rich tracts occupy residues 174 to 203 (AAAR…RGEA) and 227 to 236 (TTDEESDGAR). A compositionally biased stretch (basic residues) spans 237 to 250 (RGRGGKGKLKKRNQ). The tr-type G domain maps to 343-516 (SRAPVVTVMG…EVLELTATPT (174 aa)). The interval 352 to 359 (GHVDHGKT) is G1. 352-359 (GHVDHGKT) lines the GTP pocket. The tract at residues 377–381 (GITQH) is G2. Positions 398–401 (DTPG) are G3. GTP-binding positions include 398–402 (DTPGH) and 452–455 (NKID). Positions 452 to 455 (NKID) are G4. A G5 region spans residues 488–490 (SAK).

This sequence belongs to the TRAFAC class translation factor GTPase superfamily. Classic translation factor GTPase family. IF-2 subfamily.

It is found in the cytoplasm. In terms of biological role, one of the essential components for the initiation of protein synthesis. Protects formylmethionyl-tRNA from spontaneous hydrolysis and promotes its binding to the 30S ribosomal subunits. Also involved in the hydrolysis of GTP during the formation of the 70S ribosomal complex. The protein is Translation initiation factor IF-2 of Pseudomonas putida (strain W619).